We begin with the raw amino-acid sequence, 356 residues long: Tyrosine recombinase XerS (356 aa).

In terms of domain architecture, Core-binding (CB) spans 16–121 (IMPWYVLDYY…ALSSLYKYLT (106 aa)). One can recognise a Tyr recombinase domain in the interval 169–354 (AFLDYVDKEY…VNDEQKNALD (186 aa)). Active-site residues include Arg-210, Lys-234, His-306, Arg-309, and His-332. The active-site O-(3'-phospho-DNA)-tyrosine intermediate is Tyr-341.

The protein belongs to the 'phage' integrase family. XerS subfamily.

Its subcellular location is the cytoplasm. Its activity is regulated as follows. FtsK is required for recombination. Functionally, site-specific tyrosine recombinase, which acts by catalyzing the cutting and rejoining of the recombining DNA molecules. Essential to convert dimers of the bacterial chromosome into monomers to permit their segregation at cell division. This chain is Tyrosine recombinase XerS, found in Streptococcus equi subsp. equi (strain 4047).